Consider the following 327-residue polypeptide: MTHLQAGLSPETLEKARLELNENPDTLHQDIQEVRDMVITRPDIGFLRTDDAFILRFLRARKFHHFEAFRLLAQYFEYRQQNLDMFKSFKATDPGIKQALKDGFPGGLANLDHYGRKILVLFAANWDQSRYTLVDILRAILLSLEAMIEDPELQVNGFVLIIDWSNFTFKQASKLTPSMLRLAIEGLQDSFPARFGGIHFVNQPWYIHALYTVIRPFLKEKTRKRIFLHGNNLNSLHQLIHPEILPSEFGGMLPPYDMGTWARTLLDHEYDDDSEYNVDSYSMPVNEVDKELSPKSMKRSQSVVDPTALKRMDKSEEENMQPLLSLD.

In terms of domain architecture, CRAL-TRIO spans Ile96–Asp257. Residues Val288–Asp327 form a disordered region. Ser325 is modified (phosphoserine).

In terms of assembly, forms a complex with clathrin heavy chain and gamma-adaptin. Expressed in brain with no expression detected in non-neuronal tissues (at protein level).

It is found in the golgi apparatus. Its subcellular location is the trans-Golgi network membrane. The protein resides in the early endosome membrane. It localises to the cytoplasmic vesicle. The protein localises to the clathrin-coated vesicle. Required for normal morphology of late endosomes and/or lysosomes in neurons. Binds phosphatidylinositol 3,5-bisphosphate (PtdIns(3,5)P2). This is Clavesin-2 from Rattus norvegicus (Rat).